We begin with the raw amino-acid sequence, 40 residues long: Natriuretic peptide PtNP-a (40 aa).

Cys-9 and Cys-25 form a disulfide bridge. Positions 17-34 (ISNTSGMGCRNPIQNRPK) are enriched in polar residues. The interval 17 to 40 (ISNTSGMGCRNPIQNRPKSTPGGS) is disordered.

This sequence belongs to the natriuretic peptide family. In terms of tissue distribution, expressed by the venom gland.

Its subcellular location is the secreted. Its function is as follows. Snake venom natriuretic peptide that targets NPR1 and possibly NPR2. Exhibits hypotensive and vasodepressor activities. Recombinant PtNP-a demonstrates a dose-dependent stimulation of cGMP production via the natriuretic peptide receptor 1 (NPR1) (EC(50)=563 nM) in Madine Darby Canine Kidney (MDCK) cells. It also inhibits the angiotensin converting enzyme (ACE). The sequence is that of Natriuretic peptide PtNP-a from Pseudonaja textilis (Eastern brown snake).